A 374-amino-acid polypeptide reads, in one-letter code: Multicilin (374 aa).

Residues 164–212 (EQYWRDVADHNQKALGDALVENNQLQVSLTEKQEEIVSLKEKNIQLNEL) adopt a coiled-coil conformation. A disordered region spans residues 230 to 260 (RTKQNSGATQGRLPVKRSLEDFYPQSNEPDS). A TIRT domain region spans residues 330-374 (TDLEDVSFRTSIKEHSTIRTLAFPQGNAFTIRTSGGGYKFRWVPN).

The protein belongs to the geminin family. In terms of assembly, component of the EDM complex, at least composed of e2f4, e2f5, mcidas and tfdp1. Expressed in multiciliate differentiating cells. Expression is lost by stage 26, when multiciliate cells in the skin are fully differentiated, but is then detected in the developing nephrostomes of the kidneys where multiciliate cells form at later stages.

The protein localises to the nucleus. In terms of biological role, transcription regulator specifically required for multiciliate cell differentiation. Acts in a multiprotein complex containing E2F4 and E2F5 that binds and activates genes required for centriole biogenesis. Activates genes required for centriole assembly (plk4, cep152) and genes specifically required for motile cilia formation (foxj1). Also promotes the deuterosome pathway of centriole biogenesis by activating expression of ccdc67/deup1, but not its paralog cep63. The chain is Multicilin (mcidas) from Xenopus laevis (African clawed frog).